The sequence spans 200 residues: MKKSNNNLTLYKGYINREDRERLHGHKSFVIWFTGLPASGKSTIAHLVEKELYKRGCSTYVLDGDNVRYGLCSDLGFSIEERKENIRRVGELVKLFVDAGIIVITSFISPFKEDREKVRSLFKEEDFIEVYTKCPVETCSLRDQKGIYKKAIKGEIKNFTGISAPYEEPENPEITIFTDIDSPIEACQKILRYIKDKLKL.

Position 35–42 (35–42 (GLPASGKS)) interacts with ATP. Residue Ser109 is the Phosphoserine intermediate of the active site.

This sequence belongs to the APS kinase family.

The catalysed reaction is adenosine 5'-phosphosulfate + ATP = 3'-phosphoadenylyl sulfate + ADP + H(+). It participates in sulfur metabolism; hydrogen sulfide biosynthesis; sulfite from sulfate: step 2/3. Its function is as follows. Catalyzes the synthesis of activated sulfate. This chain is Adenylyl-sulfate kinase, found in Thermodesulfovibrio yellowstonii (strain ATCC 51303 / DSM 11347 / YP87).